The chain runs to 348 residues: MPPSLLSLEGATVRFGGRAVLDDVGLGVAEHEVVCVLGPSGSGKSTLLRAVAGLQPLDAGRVTLDGRDQSGVPAHKREVGLMFQDHQLFPQRDVAGNIAFGPRMRGASRAEQQARVAELLQLVGLPGAARRSVAALSGGEQQRVALARALAPRPRLLMLDEPLGQLDRSLRERLVVELRELFGRLGTTVLAVTHDQGEAFALADRVVVMRDGRIAQSGTPLEVWQRPADAFVARFLGFENVAEASVAGQAADTPWGKVPVPEDAPQGTRTVLVRPAGVRVVPADEGLRCTVTARTFRGTHVAVHLQPEGAPRLEAACALRAAPEVGAAVGVEFDAADVVVLGGSGVPE.

An ABC transporter domain is found at 6 to 236; the sequence is LSLEGATVRF…PADAFVARFL (231 aa). An ATP-binding site is contributed by 38 to 45; that stretch reads GPSGSGKS.

Belongs to the ABC transporter superfamily. Fe(3+) ion importer (TC 3.A.1.10) family. In terms of assembly, the complex is composed of two ATP-binding proteins (FbpC), two transmembrane proteins (FbpB) and a solute-binding protein (FbpA).

The protein localises to the cell membrane. It catalyses the reaction Fe(3+)(out) + ATP + H2O = Fe(3+)(in) + ADP + phosphate + H(+). Functionally, part of the ABC transporter complex FbpABC involved in Fe(3+) ions import. Responsible for energy coupling to the transport system. In Streptomyces coelicolor (strain ATCC BAA-471 / A3(2) / M145), this protein is Fe(3+) ions import ATP-binding protein FbpC.